Consider the following 335-residue polypeptide: Glucose-dependent insulinotropic receptor (335 aa).

The Extracellular segment spans residues M1–A12. The helical transmembrane segment at V13–I33 threads the bilayer. Over H34–D37 the chain is Cytoplasmic. Residues G38–I58 traverse the membrane as a helical segment. Over S59–R81 the chain is Extracellular. A helical transmembrane segment spans residues M82–D102. At R103–C125 the chain is on the cytoplasmic side. A helical transmembrane segment spans residues I126–F146. At Q147–H164 the chain is on the extracellular side. Residues F165 to Y185 form a helical membrane-spanning segment. The Cytoplasmic segment spans residues C186–T226. Residues V227–V247 form a helical membrane-spanning segment. Residues Q248–R262 are Extracellular-facing. A helical membrane pass occupies residues Y263 to Q283. At K284–G335 the chain is on the cytoplasmic side.

This sequence belongs to the G-protein coupled receptor 1 family. As to expression, predominantly expressed in the pancreas, especially in the islets.

The protein resides in the cell membrane. Functionally, receptor for the endogenous fatty-acid ethanolamide oleoylethanolamide (OEA) and lysophosphatidylcholine (LPC). Functions as a glucose-dependent insulinotropic receptor. The activity of this receptor is mediated by G proteins which activate adenylate cyclase. Seems to act through a G(s) mediated pathway. This Homo sapiens (Human) protein is Glucose-dependent insulinotropic receptor (GPR119).